The following is a 127-amino-acid chain: uncharacterized protein (127 aa).

The helical transmembrane segment at 5–25 threads the bilayer; it reads ILGITIAFIILLLTTVAILFS.

The protein localises to the membrane. This is an uncharacterized protein from Mycoplasma genitalium (strain ATCC 33530 / DSM 19775 / NCTC 10195 / G37) (Mycoplasmoides genitalium).